Here is a 350-residue protein sequence, read N- to C-terminus: tRNA uridine(34) hydroxylase (350 aa).

The 95-residue stretch at 146–240 folds into the Rhodanese domain; the sequence is DDPDALFIDM…YARKARDQGL (95 aa). Cys200 functions as the Cysteine persulfide intermediate in the catalytic mechanism.

Belongs to the TrhO family.

It catalyses the reaction uridine(34) in tRNA + AH2 + O2 = 5-hydroxyuridine(34) in tRNA + A + H2O. In terms of biological role, catalyzes oxygen-dependent 5-hydroxyuridine (ho5U) modification at position 34 in tRNAs, the first step in 5-carboxymethoxyuridine (cmo5U) biosynthesis. May be part of an alternate pathway, which is able to bypass cmo5U biogenesis in a subset of tRNAs under aerobic conditions. The polypeptide is tRNA uridine(34) hydroxylase (Escherichia coli O6:K15:H31 (strain 536 / UPEC)).